Consider the following 394-residue polypeptide: MSKEKFQRIKPHINVGTIGHVDHGKTTLTAAITNVLAKKYGGIPKAFDQIDNAPEEKARGITINTSHVEYDTKIRHYAHVDCPGHADYVKNMITGAAQMDGAILVVAATDGPMPQTREHILLGRQVGVPYIVVFMNKCDMVDDEELLELVEIEIRELLSQYDFPGDEIPIIRGSALKALEKDPIWIQKIIDLSEHLDNYIPEPKRIIDQPFLLPIEDVFSISGRGTVVTGRIERGTVKVGEEIEIIGIKNTVKTTCTGVEMFRKLLDEGRAGENVGILLRGTKREDVERGQVLAKPGSIKPHTQFESEVYVLKKEEGGRHTPFFNGYKPQFYFRTTDVTGSVELQKGTEMVMPGDNVKMLVKLISPIAMDDGLRFAIREGGKTVGAGIVSKIIV.

Residues 10-204 (KPHINVGTIG…HLDNYIPEPK (195 aa)) enclose the tr-type G domain. The interval 19-26 (GHVDHGKT) is G1. Position 19-26 (19-26 (GHVDHGKT)) interacts with GTP. Position 26 (threonine 26) interacts with Mg(2+). The interval 60–64 (GITIN) is G2. The G3 stretch occupies residues 81-84 (DCPG). Residues 81 to 85 (DCPGH) and 136 to 139 (NKCD) contribute to the GTP site. The tract at residues 136 to 139 (NKCD) is G4. The G5 stretch occupies residues 174-176 (SAL).

The protein belongs to the TRAFAC class translation factor GTPase superfamily. Classic translation factor GTPase family. EF-Tu/EF-1A subfamily. As to quaternary structure, monomer.

The protein resides in the cytoplasm. It carries out the reaction GTP + H2O = GDP + phosphate + H(+). Its function is as follows. GTP hydrolase that promotes the GTP-dependent binding of aminoacyl-tRNA to the A-site of ribosomes during protein biosynthesis. The chain is Elongation factor Tu from Wigglesworthia glossinidia brevipalpis.